The sequence spans 235 residues: Putative N-acetylmannosamine-6-phosphate 2-epimerase (235 aa).

It belongs to the NanE family.

It catalyses the reaction an N-acyl-D-glucosamine 6-phosphate = an N-acyl-D-mannosamine 6-phosphate. It functions in the pathway amino-sugar metabolism; N-acetylneuraminate degradation; D-fructose 6-phosphate from N-acetylneuraminate: step 3/5. Converts N-acetylmannosamine-6-phosphate (ManNAc-6-P) to N-acetylglucosamine-6-phosphate (GlcNAc-6-P). This is Putative N-acetylmannosamine-6-phosphate 2-epimerase from Enterobacter sp. (strain 638).